The primary structure comprises 407 residues: MSNVLDELIERGYAKQFTHEEETRKLLSEEKVTFYIGFDPTGDSLHVGHFIALMLMARMQKAGHRPIVLIGGGTAMVGDPTGKTDMRKMLTREEINHNVECLKKQMSRFIDFSDDKAIIVNNAEWLMGQNYIEFLREVGVHFSVNKMLTAECFKQRMEKGLSFLEFNYMLMQGFDFYKLNEKYDCKMELGGDDQWSNMIAGVELIRRKSNKKAYAMTSALLTNSEGKKMGKTEKGALWLDAEKTSPYDFFQYWRNVNDADVEKCLSMLTFLPMDEVRRLASLKDQEINKAKEVLAYEVTKLVHGEEEAKKALNSSKALFGGGTNMDNVPTVSIPEDMLSSSILDVLVHTKIIPSKGEGRRLVQQGGITLNDTKVEDFNYEITKEDFNDDGFALVRRGKKKYYKIVIG.

Y35 is a binding site for L-tyrosine. The 'HIGH' region motif lies at P40–H49. Residues Y168 and Q172 each coordinate L-tyrosine. The short motif at K228 to T232 is the 'KMSKS' region element. K231 lines the ATP pocket. Residues S340–I406 enclose the S4 RNA-binding domain.

It belongs to the class-I aminoacyl-tRNA synthetase family. TyrS type 1 subfamily. As to quaternary structure, homodimer.

Its subcellular location is the cytoplasm. It carries out the reaction tRNA(Tyr) + L-tyrosine + ATP = L-tyrosyl-tRNA(Tyr) + AMP + diphosphate + H(+). Its function is as follows. Catalyzes the attachment of tyrosine to tRNA(Tyr) in a two-step reaction: tyrosine is first activated by ATP to form Tyr-AMP and then transferred to the acceptor end of tRNA(Tyr). This is Tyrosine--tRNA ligase 1 from Clostridium acetobutylicum (strain ATCC 824 / DSM 792 / JCM 1419 / IAM 19013 / LMG 5710 / NBRC 13948 / NRRL B-527 / VKM B-1787 / 2291 / W).